The sequence spans 216 residues: NADH-quinone oxidoreductase subunit C (216 aa).

The protein belongs to the complex I 30 kDa subunit family. In terms of assembly, NDH-1 is composed of 14 different subunits. Subunits NuoB, C, D, E, F, and G constitute the peripheral sector of the complex.

It localises to the cell inner membrane. The catalysed reaction is a quinone + NADH + 5 H(+)(in) = a quinol + NAD(+) + 4 H(+)(out). NDH-1 shuttles electrons from NADH, via FMN and iron-sulfur (Fe-S) centers, to quinones in the respiratory chain. The immediate electron acceptor for the enzyme in this species is believed to be ubiquinone. Couples the redox reaction to proton translocation (for every two electrons transferred, four hydrogen ions are translocated across the cytoplasmic membrane), and thus conserves the redox energy in a proton gradient. The sequence is that of NADH-quinone oxidoreductase subunit C from Francisella tularensis subsp. holarctica (strain OSU18).